An 84-amino-acid chain; its full sequence is Large ribosomal subunit protein bL27 (84 aa).

The tract at residues 1–22 is disordered; that stretch reads MAHKKAGGSTRNGRDSESKRLG.

This sequence belongs to the bacterial ribosomal protein bL27 family.

The sequence is that of Large ribosomal subunit protein bL27 from Shewanella frigidimarina (strain NCIMB 400).